A 906-amino-acid polypeptide reads, in one-letter code: Protein translocase subunit SecA (906 aa).

ATP-binding positions include Gln86, 104–108 (GEGKT), and Asp511. 2 stretches are compositionally biased toward basic and acidic residues: residues 853 to 865 (HESVIDNNQRHDE) and 877 to 888 (VRREGPKVKRND). A disordered region spans residues 853–906 (HESVIDNNQRHDEDEQEEAPKVQQVRREGPKVKRNDPCPCGSGKKYKQCHSKVE). 4 residues coordinate Zn(2+): Cys890, Cys892, Cys901, and His902. Residues 896–906 (KKYKQCHSKVE) are compositionally biased toward basic residues.

It belongs to the SecA family. Monomer and homodimer. Part of the essential Sec protein translocation apparatus which comprises SecA, SecYEG and auxiliary proteins SecDF-YajC and YidC. The cofactor is Zn(2+).

Its subcellular location is the cell inner membrane. It is found in the cytoplasm. The catalysed reaction is ATP + H2O + cellular proteinSide 1 = ADP + phosphate + cellular proteinSide 2.. In terms of biological role, part of the Sec protein translocase complex. Interacts with the SecYEG preprotein conducting channel. Has a central role in coupling the hydrolysis of ATP to the transfer of proteins into and across the cell membrane, serving both as a receptor for the preprotein-SecB complex and as an ATP-driven molecular motor driving the stepwise translocation of polypeptide chains across the membrane. This is Protein translocase subunit SecA from Francisella tularensis subsp. mediasiatica (strain FSC147).